Here is a 516-residue protein sequence, read N- to C-terminus: Bifunctional purine biosynthesis protein PurH (516 aa).

Residues 1–146 (MTRLALLSVS…KNYAHVTVLS (146 aa)) enclose the MGS-like domain.

The protein belongs to the PurH family.

The enzyme catalyses (6R)-10-formyltetrahydrofolate + 5-amino-1-(5-phospho-beta-D-ribosyl)imidazole-4-carboxamide = 5-formamido-1-(5-phospho-D-ribosyl)imidazole-4-carboxamide + (6S)-5,6,7,8-tetrahydrofolate. It carries out the reaction IMP + H2O = 5-formamido-1-(5-phospho-D-ribosyl)imidazole-4-carboxamide. It functions in the pathway purine metabolism; IMP biosynthesis via de novo pathway; 5-formamido-1-(5-phospho-D-ribosyl)imidazole-4-carboxamide from 5-amino-1-(5-phospho-D-ribosyl)imidazole-4-carboxamide (10-formyl THF route): step 1/1. It participates in purine metabolism; IMP biosynthesis via de novo pathway; IMP from 5-formamido-1-(5-phospho-D-ribosyl)imidazole-4-carboxamide: step 1/1. In Rippkaea orientalis (strain PCC 8801 / RF-1) (Cyanothece sp. (strain PCC 8801)), this protein is Bifunctional purine biosynthesis protein PurH.